Here is a 186-residue protein sequence, read N- to C-terminus: Threonylcarbamoyl-AMP synthase (186 aa).

A YrdC-like domain is found at 5–186 (TQSINDAVKC…DAITGEILRL (182 aa)).

It belongs to the SUA5 family. TsaC subfamily.

The protein resides in the cytoplasm. The catalysed reaction is L-threonine + hydrogencarbonate + ATP = L-threonylcarbamoyladenylate + diphosphate + H2O. In terms of biological role, required for the formation of a threonylcarbamoyl group on adenosine at position 37 (t(6)A37) in tRNAs that read codons beginning with adenine. Catalyzes the conversion of L-threonine, HCO(3)(-)/CO(2) and ATP to give threonylcarbamoyl-AMP (TC-AMP) as the acyladenylate intermediate, with the release of diphosphate. This chain is Threonylcarbamoyl-AMP synthase, found in Coxiella burnetii (strain RSA 331 / Henzerling II).